Reading from the N-terminus, the 351-residue chain is dTDP-glucose 4,6-dehydratase (351 aa).

NAD(+)-binding positions include 12–13 (FI), 32–35 (DALT), 58–59 (DI), 80–84 (FAAES), and Thr-99. Substrate is bound at residue Ser-84. Thr-133 contacts substrate. The active-site Proton donor is Asp-134. Catalysis depends on proton acceptor residues Glu-135 and Tyr-158. 158–162 (YSASK) contributes to the NAD(+) binding site. Asn-187 serves as a coordination point for substrate. Residue Asn-188 coordinates NAD(+). Substrate-binding positions include 197–198 (KL), 213–215 (PVY), Arg-222, Asn-257, and 289–293 (DRPGH).

Belongs to the NAD(P)-dependent epimerase/dehydratase family. dTDP-glucose dehydratase subfamily. As to quaternary structure, homodimer. NAD(+) is required as a cofactor.

The catalysed reaction is dTDP-alpha-D-glucose = dTDP-4-dehydro-6-deoxy-alpha-D-glucose + H2O. The protein operates within carbohydrate biosynthesis; dTDP-L-rhamnose biosynthesis. It functions in the pathway bacterial outer membrane biogenesis; LPS O-antigen biosynthesis. Functionally, catalyzes the dehydration of dTDP-D-glucose to form dTDP-6-deoxy-D-xylo-4-hexulose via a three-step process involving oxidation, dehydration and reduction. This is dTDP-glucose 4,6-dehydratase (rfbB) from Xanthomonas campestris pv. campestris (strain B100).